The chain runs to 320 residues: Mitochondrial oxaloacetate transport protein (320 aa).

Solcar repeat units follow at residues 21–114 (LGPV…IRRT), 126–218 (NKLA…AKRM), and 227–313 (EGMI…TNKL). The next 6 membrane-spanning stretches (helical) occupy residues 26 to 47 (GFLS…FEVI), 91 to 111 (GTAY…YEPI), 129 to 145 (AINV…GALF), 197 to 217 (AILR…WAKR), 233 to 253 (LTAS…FDTV), and 285 to 306 (LYKG…CLTF).

It belongs to the mitochondrial carrier (TC 2.A.29) family.

It is found in the mitochondrion inner membrane. It carries out the reaction a dicarboxylate(in) + sulfate(out) = a dicarboxylate(out) + sulfate(in). The enzyme catalyses (2S)-2-isopropylmalate(in) + sulfate(out) = (2S)-2-isopropylmalate(out) + sulfate(in). It catalyses the reaction (2R,3S)-3-isopropylmalate(in) + sulfate(out) = (2R,3S)-3-isopropylmalate(out) + sulfate(in). The catalysed reaction is malonate(in) + sulfate(out) = malonate(out) + sulfate(in). It carries out the reaction oxaloacetate(in) + sulfate(out) = oxaloacetate(out) + sulfate(in). The enzyme catalyses thiosulfate(in) + sulfate(out) = thiosulfate(out) + sulfate(in). Functionally, antiporter that exchanges dicarboxylates and sulfur oxoanions across the inner membrane of mitochondria. Exports alpha-isopropylmalate from mitochondrial matrix to the cytosol, where it serves as a precursor for leucine biosynthesis. This chain is Mitochondrial oxaloacetate transport protein (oac1), found in Schizosaccharomyces pombe (strain 972 / ATCC 24843) (Fission yeast).